A 208-amino-acid chain; its full sequence is UPF0637 protein lp_2332 (208 aa).

This sequence belongs to the UPF0637 family.

The polypeptide is UPF0637 protein lp_2332 (Lactiplantibacillus plantarum (strain ATCC BAA-793 / NCIMB 8826 / WCFS1) (Lactobacillus plantarum)).